Here is a 207-residue protein sequence, read N- to C-terminus: Small ribosomal subunit protein uS4 (207 aa).

A disordered region spans residues 31–54 (KCKLDTKPGQHGRTSGSRTSDYGN). Polar residues predominate over residues 42-53 (GRTSGSRTSDYG). Residues 97 to 158 (SRLDNVVYRM…KAKKQARITE (62 aa)) form the S4 RNA-binding domain.

The protein belongs to the universal ribosomal protein uS4 family. Part of the 30S ribosomal subunit. Contacts protein S5. The interaction surface between S4 and S5 is involved in control of translational fidelity.

Functionally, one of the primary rRNA binding proteins, it binds directly to 16S rRNA where it nucleates assembly of the body of the 30S subunit. With S5 and S12 plays an important role in translational accuracy. This Polynucleobacter asymbioticus (strain DSM 18221 / CIP 109841 / QLW-P1DMWA-1) (Polynucleobacter necessarius subsp. asymbioticus) protein is Small ribosomal subunit protein uS4.